We begin with the raw amino-acid sequence, 117 residues long: Large ribosomal subunit protein bL20 (117 aa).

This sequence belongs to the bacterial ribosomal protein bL20 family.

Its function is as follows. Binds directly to 23S ribosomal RNA and is necessary for the in vitro assembly process of the 50S ribosomal subunit. It is not involved in the protein synthesizing functions of that subunit. The protein is Large ribosomal subunit protein bL20 of Rickettsia rickettsii (strain Iowa).